The sequence spans 321 residues: Endoglucanase 1 (321 aa).

An N-terminal signal peptide occupies residues 1–27 (MSRKLRTLMAALCALPLAFAAAPPAHA). Asp-110 is an active-site residue. A disulfide bridge connects residues Cys-112 and Cys-156. The Proton donor role is filled by Asp-149. The active-site Nucleophile is Asp-295.

Belongs to the glycosyl hydrolase 6 (cellulase B) family.

It catalyses the reaction Endohydrolysis of (1-&gt;4)-beta-D-glucosidic linkages in cellulose, lichenin and cereal beta-D-glucans.. Its function is as follows. Implicated in the mechanism of induction exerted by cellobiose. The protein is Endoglucanase 1 (celA1) of Streptomyces halstedii.